Here is a 133-residue protein sequence, read N- to C-terminus: ATP synthase epsilon chain (133 aa).

It belongs to the ATPase epsilon chain family. As to quaternary structure, F-type ATPases have 2 components, CF(1) - the catalytic core - and CF(0) - the membrane proton channel. CF(1) has five subunits: alpha(3), beta(3), gamma(1), delta(1), epsilon(1). CF(0) has three main subunits: a, b and c.

It is found in the cell membrane. In terms of biological role, produces ATP from ADP in the presence of a proton gradient across the membrane. The sequence is that of ATP synthase epsilon chain from Bacillus cytotoxicus (strain DSM 22905 / CIP 110041 / 391-98 / NVH 391-98).